A 273-amino-acid chain; its full sequence is XIAP-associated factor 1 (273 aa).

Residues 22–80 (LHEAHCLRFIVLCPECEEPIPESKMKEHMEVVHQQTKESQQHPAKCKFCELAVQLSNLD) form a TRAF-type zinc finger. The tract at residues 181–228 (GNRRSTVSKDVRPKTKNRNSSTKRETKKQNGTVALPLKSGLQQRADLP) is disordered.

As to quaternary structure, interacts with BIRC1, BIRC2, BIRC3, BIRC4, BIRC7 and BIRC8. Part of an complex consisting of BIRC4, XAF1 and BIRC5; the complex formation requires IFN-beta stimulation. Interacts with RNF114, the interaction increases XAF1 stability and proapoptotic effects, and may regulate IFN signaling.

Its subcellular location is the cytoplasm. It localises to the nucleus. The protein resides in the mitochondrion. In terms of biological role, seems to function as a negative regulator of members of the IAP (inhibitor of apoptosis protein) family. Inhibits anti-caspase activity of BIRC4. Induces cleavage and inactivation of BIRC4 independent of caspase activation. Mediates TNF-alpha-induced apoptosis and is involved in apoptosis in trophoblast cells. May inhibit BIRC4 indirectly by activating the mitochondrial apoptosis pathway. After translocation to mitochondria, promotes translocation of BAX to mitochondria and cytochrome c release from mitochondria. Seems to promote the redistribution of BIRC4 from the cytoplasm to the nucleus, probably independent of BIRC4 inactivation which seems to occur in the cytoplasm. The BIRC4-XAF1 complex mediates down-regulation of BIRC5/survivin; the process requires the E3 ligase activity of BIRC4. Seems to be involved in cellular sensitivity to the proapoptotic actions of TRAIL. May be a tumor suppressor by mediating apoptosis resistance of cancer cells. This is XIAP-associated factor 1 (Xaf1) from Mus musculus (Mouse).